The sequence spans 454 residues: uncharacterized protein (454 aa).

Residues Cys-73, Cys-79, Cys-82, and Cys-154 each contribute to the [4Fe-4S] cluster site. S-adenosyl-L-methionine contacts are provided by Gln-279, Phe-307, Asp-328, and Asp-381. The Nucleophile role is filled by Cys-408.

This sequence belongs to the class I-like SAM-binding methyltransferase superfamily. RNA M5U methyltransferase family.

This is an uncharacterized protein from Leptospira interrogans serogroup Icterohaemorrhagiae serovar copenhageni (strain Fiocruz L1-130).